The primary structure comprises 410 residues: MTTLLPALDLAQLDALDARDPLAHKRAEFDLPGDIIYLDGNSLGALPRRVPARLSQVATEEWGHHLIRSWTRNAEAAQDWMALPDRVAAKLAPLLGAGAHEVAVGDSTSVNTFKALAAALRLSGRRVILSDADNFPTDLYVAQGLARLLGDVEVRTAPGDEMTQHFTDDVGVVLLTEVDYRTGRRLDMRAITAAAHARGIVTVWDLAHSAGAFAVDLGGAGADFAIGCGYKFLNGGPGAPAFLYVAERHLDRAEVVLSGWMGHADPFEMARAYAPAPGARRFVVGTPQVLSLSALDAALDVFGDVDLGALREKSLSLTDTFIRLMEPLAEQYPLELVTPLAHAERGSQVSYRHPHAQQVMAQLIECGIVGDFRTPDILRFGFTPLYLSHGDVGRAVAGIAAVLDELEGPA.

Pyridoxal 5'-phosphate contacts are provided by residues threonine 108, serine 109, 135–138, threonine 176, aspartate 205, histidine 208, and tyrosine 230; that span reads FPTD. N6-(pyridoxal phosphate)lysine is present on lysine 231. Pyridoxal 5'-phosphate is bound by residues tryptophan 260 and threonine 286.

The protein belongs to the kynureninase family. Homodimer. Pyridoxal 5'-phosphate is required as a cofactor.

It carries out the reaction L-kynurenine + H2O = anthranilate + L-alanine + H(+). The enzyme catalyses 3-hydroxy-L-kynurenine + H2O = 3-hydroxyanthranilate + L-alanine + H(+). It participates in amino-acid degradation; L-kynurenine degradation; L-alanine and anthranilate from L-kynurenine: step 1/1. Its pathway is cofactor biosynthesis; NAD(+) biosynthesis; quinolinate from L-kynurenine: step 2/3. Functionally, catalyzes the cleavage of L-kynurenine (L-Kyn) and L-3-hydroxykynurenine (L-3OHKyn) into anthranilic acid (AA) and 3-hydroxyanthranilic acid (3-OHAA), respectively. This Deinococcus radiodurans (strain ATCC 13939 / DSM 20539 / JCM 16871 / CCUG 27074 / LMG 4051 / NBRC 15346 / NCIMB 9279 / VKM B-1422 / R1) protein is Kynureninase.